The primary structure comprises 206 residues: Large ribosomal subunit protein uL4 (206 aa).

Residues 55–80 form a disordered region; sequence AFVSGGGAKPWRQKGTGRARSGSNRS.

This sequence belongs to the universal ribosomal protein uL4 family. As to quaternary structure, part of the 50S ribosomal subunit.

Functionally, one of the primary rRNA binding proteins, this protein initially binds near the 5'-end of the 23S rRNA. It is important during the early stages of 50S assembly. It makes multiple contacts with different domains of the 23S rRNA in the assembled 50S subunit and ribosome. In terms of biological role, forms part of the polypeptide exit tunnel. This Nitratidesulfovibrio vulgaris (strain DSM 19637 / Miyazaki F) (Desulfovibrio vulgaris) protein is Large ribosomal subunit protein uL4.